Consider the following 478-residue polypeptide: Lipoprotein lipase (478 aa).

The first 27 residues, 1-27, serve as a signal peptide directing secretion; it reads MESKALLLVALSVWLQSLIVSREGLAT. The segment at 35 to 56 is interaction with GPIHBP1; that stretch reads RDFTDIESKFALRTPEDTVEDT. A disulfide bridge connects residues Cys-57 and Cys-70. An N-linked (GlcNAc...) asparagine glycan is attached at Asn-73. Tyr-124 carries the 3'-nitrotyrosine modification. Residue Ser-162 is the Nucleophile of the active site. Asp-186 (charge relay system) is an active-site residue. A 3'-nitrotyrosine modification is found at Tyr-194. Ca(2+)-binding residues include Ala-197, Arg-200, Ser-202, and Asp-205. A disulfide bridge connects residues Cys-246 and Cys-269. Residues 246–269 form an essential for determining substrate specificity region; it reads CNIGEAIRVIAERGLGDVDQLVKC. The active-site Charge relay system is His-271. Cystine bridges form between Cys-294–Cys-313 and Cys-305–Cys-308. A PLAT domain is found at 344–467; that stretch reads FHYQVKMRFS…KGKSSVVFVK (124 aa). The residue at position 346 (Tyr-346) is a 3'-nitrotyrosine. Asn-389 carries an N-linked (GlcNAc...) asparagine glycan. Positions 420–424 are important for interaction with lipoprotein particles; that stretch reads WSNWW. Residues 433-437 are important for heparin binding; that stretch reads KIRVK. Residues 446 to 470 form an interaction with GPIHBP1 region; it reads IFCSREKKSHLQKGKSSVVFVKCHD. A disulfide bridge links Cys-448 with Cys-468.

Belongs to the AB hydrolase superfamily. Lipase family. Homodimer. Interacts with GPIHBP1 with 1:1 stoichiometry. Interacts with APOC2; the interaction activates LPL activity in the presence of lipids. Interaction with heparan sulfate proteoglycans is required to protect LPL against loss of activity. Associates with lipoprotein particles in blood plasma. Interacts with LMF1 and SEL1L; interaction with SEL1L is required to prevent aggregation of newly synthesized LPL in the endoplasmic reticulum (ER), and for normal export of LPL from the ER to the extracellular space. Interacts with SORL1; SORL1 acts as a sorting receptor, promoting LPL localization to endosomes and later to lysosomes, leading to degradation of newly synthesized LPL. In terms of processing, tyrosine nitration after lipopolysaccharide (LPS) challenge down-regulates the lipase activity.

It is found in the cell membrane. The protein localises to the secreted. Its subcellular location is the extracellular space. It localises to the extracellular matrix. It carries out the reaction a triacylglycerol + H2O = a diacylglycerol + a fatty acid + H(+). It catalyses the reaction a 1,2-diacyl-sn-glycero-3-phosphocholine + H2O = a 2-acyl-sn-glycero-3-phosphocholine + a fatty acid + H(+). The enzyme catalyses 1,2,3-tri-(9Z-octadecenoyl)-glycerol + H2O = di-(9Z)-octadecenoylglycerol + (9Z)-octadecenoate + H(+). The catalysed reaction is 1,2-di-(9Z-octadecenoyl)-sn-glycero-3-phosphocholine + H2O = (9Z-octadecenoyl)-sn-glycero-3-phosphocholine + (9Z)-octadecenoate + H(+). It carries out the reaction 1,2,3-tributanoylglycerol + H2O = dibutanoylglycerol + butanoate + H(+). It catalyses the reaction 1,2-dihexadecanoyl-sn-glycero-3-phosphocholine + H2O = hexadecanoyl-sn-glycero-3-phosphocholine + hexadecanoate + H(+). Its activity is regulated as follows. The apolipoprotein APOC2 acts as a coactivator of LPL activity. Ca(2+) binding promotes protein stability and formation of the active homodimer. Interaction with GPIHBP1 protects LPL against inactivation by ANGPTL4. Its function is as follows. Key enzyme in triglyceride metabolism. Catalyzes the hydrolysis of triglycerides from circulating chylomicrons and very low density lipoproteins (VLDL), and thereby plays an important role in lipid clearance from the blood stream, lipid utilization and storage. Although it has both phospholipase and triglyceride lipase activities it is primarily a triglyceride lipase with low but detectable phospholipase activity. Mediates margination of triglyceride-rich lipoprotein particles in capillaries. Recruited to its site of action on the luminal surface of vascular endothelium by binding to GPIHBP1 and cell surface heparan sulfate proteoglycans. The chain is Lipoprotein lipase (LPL) from Sus scrofa (Pig).